The following is a 156-amino-acid chain: Lipoprotein signal peptidase (156 aa).

A helical membrane pass occupies residues 62–82 (GNTVFMVLSAVIIAILSYTKI). Residues D115 and D133 contribute to the active site. Residues 126-146 (WPAFNLADLTITCGVIVFLAM) traverse the membrane as a helical segment.

The protein belongs to the peptidase A8 family.

The protein resides in the cell inner membrane. The enzyme catalyses Release of signal peptides from bacterial membrane prolipoproteins. Hydrolyzes -Xaa-Yaa-Zaa-|-(S,diacylglyceryl)Cys-, in which Xaa is hydrophobic (preferably Leu), and Yaa (Ala or Ser) and Zaa (Gly or Ala) have small, neutral side chains.. The protein operates within protein modification; lipoprotein biosynthesis (signal peptide cleavage). Its function is as follows. This protein specifically catalyzes the removal of signal peptides from prolipoproteins. This is Lipoprotein signal peptidase from Anaplasma phagocytophilum (strain HZ).